We begin with the raw amino-acid sequence, 397 residues long: Phosphoglycerate kinase (397 aa).

Substrate contacts are provided by residues 21-23 (DFN), Arg-37, 60-63 (HLGR), Arg-119, and Arg-152. Residues Lys-203, Gly-294, Glu-325, and 354-357 (GGDS) each bind ATP.

This sequence belongs to the phosphoglycerate kinase family. In terms of assembly, monomer.

Its subcellular location is the cytoplasm. It carries out the reaction (2R)-3-phosphoglycerate + ATP = (2R)-3-phospho-glyceroyl phosphate + ADP. Its pathway is carbohydrate degradation; glycolysis; pyruvate from D-glyceraldehyde 3-phosphate: step 2/5. The polypeptide is Phosphoglycerate kinase (Chlorobium limicola (strain DSM 245 / NBRC 103803 / 6330)).